Here is a 100-residue protein sequence, read N- to C-terminus: Urease subunit gamma (100 aa).

This sequence belongs to the urease gamma subunit family. Heterotrimer of UreA (gamma), UreB (beta) and UreC (alpha) subunits. Three heterotrimers associate to form the active enzyme.

It is found in the cytoplasm. The catalysed reaction is urea + 2 H2O + H(+) = hydrogencarbonate + 2 NH4(+). It functions in the pathway nitrogen metabolism; urea degradation; CO(2) and NH(3) from urea (urease route): step 1/1. This is Urease subunit gamma from Pseudomonas putida (strain W619).